Reading from the N-terminus, the 333-residue chain is Trans-1,2-dihydrobenzene-1,2-diol dehydrogenase (333 aa).

It belongs to the Gfo/Idh/MocA family. As to quaternary structure, homodimer.

It carries out the reaction (1R,2R)-1,2-dihydrobenzene-1,2-diol + NADP(+) = catechol + NADPH + H(+). It catalyses the reaction D-xylose + NADP(+) = D-xylono-1,5-lactone + NADPH + H(+). This is Trans-1,2-dihydrobenzene-1,2-diol dehydrogenase (Dhdh) from Mus musculus (Mouse).